A 614-amino-acid chain; its full sequence is Probable NOT transcription complex subunit VIP2 (614 aa).

Disordered stretches follow at residues 1-46 (MSNL…NLQG), 58-89 (NMQGTLTSRNSSMNSIPSAGVQQPNGSFSSGR), and 361-391 (NLGATYSSHRPQQQPQHTSSTGGLQGLGLRP). The segment covering 364–381 (ATYSSHRPQQQPQHTSST) has biased composition (polar residues).

It belongs to the CNOT2/3/5 family. Interacts with Agrobacterium tumefaciens VirE2. Binds to VIP1. Forms a complex made of Agrobacterium VirE2, VIP1, VIP2 and single-stranded DNA (ssDNA).

The protein localises to the nucleus. Its function is as follows. Transcriptional regulator required for Agrobacterium-mediated stable genetic transformation by T-DNA integration in host genome, but not for T-DNA transient expression. The chain is Probable NOT transcription complex subunit VIP2 (VIP2) from Arabidopsis thaliana (Mouse-ear cress).